Here is a 467-residue protein sequence, read N- to C-terminus: UDP-N-acetylmuramate--L-alanine ligase (467 aa).

Glycine 114 to threonine 120 provides a ligand contact to ATP.

This sequence belongs to the MurCDEF family.

It is found in the cytoplasm. It carries out the reaction UDP-N-acetyl-alpha-D-muramate + L-alanine + ATP = UDP-N-acetyl-alpha-D-muramoyl-L-alanine + ADP + phosphate + H(+). It participates in cell wall biogenesis; peptidoglycan biosynthesis. In terms of biological role, cell wall formation. The polypeptide is UDP-N-acetylmuramate--L-alanine ligase (Rhodopseudomonas palustris (strain TIE-1)).